A 174-amino-acid chain; its full sequence is Urease accessory protein UreE (174 aa).

The protein belongs to the UreE family.

The protein resides in the cytoplasm. Its function is as follows. Involved in urease metallocenter assembly. Binds nickel. Probably functions as a nickel donor during metallocenter assembly. The chain is Urease accessory protein UreE from Helicobacter hepaticus (strain ATCC 51449 / 3B1).